Consider the following 299-residue polypeptide: UDP-3-O-acyl-N-acetylglucosamine deacetylase (299 aa).

The Zn(2+) site is built by H75, H232, and D236. H259 (proton donor) is an active-site residue.

It belongs to the LpxC family. The cofactor is Zn(2+).

It catalyses the reaction a UDP-3-O-[(3R)-3-hydroxyacyl]-N-acetyl-alpha-D-glucosamine + H2O = a UDP-3-O-[(3R)-3-hydroxyacyl]-alpha-D-glucosamine + acetate. Its pathway is glycolipid biosynthesis; lipid IV(A) biosynthesis; lipid IV(A) from (3R)-3-hydroxytetradecanoyl-[acyl-carrier-protein] and UDP-N-acetyl-alpha-D-glucosamine: step 2/6. Functionally, catalyzes the hydrolysis of UDP-3-O-myristoyl-N-acetylglucosamine to form UDP-3-O-myristoylglucosamine and acetate, the committed step in lipid A biosynthesis. In Helicobacter hepaticus (strain ATCC 51449 / 3B1), this protein is UDP-3-O-acyl-N-acetylglucosamine deacetylase.